Reading from the N-terminus, the 793-residue chain is E3 UFM1-protein ligase 1 (793 aa).

Position 2 is an N-acetylalanine (A2). The segment at 2–200 (ADAWEEIRRL…RGLFSAITRP (199 aa)) is mediates interaction with DDRGK1. The required for E3 UFM1-protein ligase activity stretch occupies residues 2 to 212 (ADAWEEIRRL…VNSLISKYGF (211 aa)). An involved in CDK5RAP3-binding region spans residues 121–250 (DRLAEEVNDK…KAVFVPDIYS (130 aa)). The segment at 200–400 (PTAVNSLISK…NPVHLITEED (201 aa)) is mediates interaction with TRIP4. The interval 407-473 (LESVSTSKKD…SSHTGKKKPE (67 aa)) is disordered. R433 bears the Omega-N-methylarginine mark. A Phosphoserine modification is found at S458. Residues 490–684 (IQDAPEEFIS…QLKVTEDPAL (195 aa)) form a mediates interaction with CDK5RAP3 region. The residue at position 536 (T536) is a Phosphothreonine.

The protein belongs to the UFL1 family. In terms of assembly, catalytic component of the UFM1 ribosome E3 ligase (UREL) complex, composed of UFL1, DDRGK1 and CDK5RAP3. Interacts with E2-like enzyme UFC1. Interacts with RELA. Interacts with NBN; promoting recruitment to double-strand breaks following DNA damage. Interacts (when phosphorylated) with YWHAG/14-3-3-gamma; sequestering UFL1 and preventing its association with PDCD1/PD-1 substrate. Post-translationally, ubiquitinated, leading to its degradation by the proteasome. Interaction with CDK5RAP3 protects both proteins against ubiquitination and degradation via the proteasome. In terms of processing, phosphorylation at Thr-536 by AMPK promotes its interaction with YWHAG/14-3-3-gamma, thereby preventing UFL1 association with PDCD1/PD-1 substrate.

It localises to the endoplasmic reticulum membrane. Its subcellular location is the cytoplasm. It is found in the cytosol. The protein localises to the nucleus. The protein resides in the chromosome. In terms of biological role, E3 protein ligase that mediates ufmylation, the covalent attachment of the ubiquitin-like modifier UFM1 to lysine residues on target proteins, and which plays a key role in various processes, such as ribosome recycling, response to DNA damage, interferon response or reticulophagy (also called ER-phagy). Catalyzes ufmylation of many protein, such as CD274/PD-L1, CDK5RAP3, CYB5R3, DDRGK1, EIF6, histone H4, MRE11, P4HB, PDCD1/PD-1, TRIP4, RPN1, RPS20/uS10, RPL10/uL16, RPL26/uL24, SYVN1/HRD1 and TP53/p53. As part of the UREL complex, plays a key role in ribosome recycling by catalyzing mono-ufmylation of RPL26/uL24 subunit of the 60S ribosome. Ufmylation of RPL26/uL24 occurs on free 60S ribosomes following ribosome dissociation: it weakens the junction between post-termination 60S subunits and SEC61 translocons, promoting release and recycling of the large ribosomal subunit from the endoplasmic reticulum membrane. Ufmylation of RPL26/uL24 and subsequent 60S ribosome recycling either take place after normal termination of translation or after ribosome stalling during cotranslational translocation at the endoplasmic reticulum. Involved in reticulophagy in response to endoplasmic reticulum stress by mediating ufmylation of proteins such as CYB5R3 and RPN1, thereby promoting lysosomal degradation of ufmylated proteins. Ufmylation in response to endoplasmic reticulum stress is essential for processes such as hematopoiesis, blood vessel morphogenesis or inflammatory response. Mediates ufmylation of DDRGK1 and CDK5RAP3; the role of these modifications is however unclear: as both DDRGK1 and CDK5RAP3 act as substrate adapters for ufmylation, it is uncertain whether ufmylation of these proteins is, a collateral effect or is required for ufmylation. Acts as a negative regulator of T-cell activation by mediating ufmylation and stabilization of PDCD1/PD-1. Also involved in the response to DNA damage: recruited to double-strand break sites following DNA damage and mediates monoufmylation of histone H4 and ufmylation of MRE11. Mediates ufmylation of TP53/p53, promoting its stability. Catalyzes ufmylation of TRIP4, thereby playing a role in nuclear receptor-mediated transcription. Required for hematopoietic stem cell function and hematopoiesis. This chain is E3 UFM1-protein ligase 1, found in Macaca fascicularis (Crab-eating macaque).